We begin with the raw amino-acid sequence, 837 residues long: Translation initiation factor IF-2 (837 aa).

Residues 94–252 (QRSPEEIEAE…NAHGFQSPTG (159 aa)) are disordered. Residues 96 to 136 (SPEEIEAERKRELDERRAVENAARQKAEEEARVRAEEEARR) show a composition bias toward basic and acidic residues. Low complexity predominate over residues 137–171 (QPAAPSAPAEAVAAPAPVAEPVREAAPVVAAAPAA). Basic and acidic residues-rich tracts occupy residues 172-213 (DTRK…EKAP) and 221-230 (TTDEESDGFR). A compositionally biased stretch (basic residues) spans 231–244 (RGGRGKAKLKKRNA). One can recognise a tr-type G domain in the interval 337 to 506 (PRAPVVTVMG…LLQAEVLELT (170 aa)). Positions 346–353 (GHVDHGKT) are G1. 346–353 (GHVDHGKT) serves as a coordination point for GTP. Residues 371–375 (GITQH) form a G2 region. The tract at residues 392–395 (DTPG) is G3. GTP contacts are provided by residues 392 to 396 (DTPGH) and 446 to 449 (NKID). The interval 446 to 449 (NKID) is G4. Positions 482–484 (SAK) are G5.

It belongs to the TRAFAC class translation factor GTPase superfamily. Classic translation factor GTPase family. IF-2 subfamily.

The protein resides in the cytoplasm. Its function is as follows. One of the essential components for the initiation of protein synthesis. Protects formylmethionyl-tRNA from spontaneous hydrolysis and promotes its binding to the 30S ribosomal subunits. Also involved in the hydrolysis of GTP during the formation of the 70S ribosomal complex. The protein is Translation initiation factor IF-2 of Pseudomonas fluorescens (strain Pf0-1).